Reading from the N-terminus, the 222-residue chain is Chalcone--flavanone isomerase 1 (222 aa).

Positions 48, 113, and 190 each coordinate substrate.

The protein belongs to the chalcone isomerase family.

The enzyme catalyses a chalcone = a flavanone.. Its pathway is secondary metabolite biosynthesis; flavonoid biosynthesis. Catalyzes the intramolecular cyclization of bicyclic chalcones into tricyclic (S)-flavanones. Responsible for the isomerization of 4,2',4',6'-tetrahydroxychalcone (also termed chalcone) into naringenin. The sequence is that of Chalcone--flavanone isomerase 1 (CHI1) from Medicago sativa (Alfalfa).